A 286-amino-acid polypeptide reads, in one-letter code: Tryptophan 2,3-dioxygenase (286 aa).

Substrate is bound by residues 55 to 59 (FIIIH), tyrosine 117, and arginine 121. Heme is bound at residue histidine 244. Residue threonine 258 coordinates substrate.

Belongs to the tryptophan 2,3-dioxygenase family. Homotetramer. Requires heme as cofactor.

It catalyses the reaction L-tryptophan + O2 = N-formyl-L-kynurenine. Its pathway is amino-acid degradation; L-tryptophan degradation via kynurenine pathway; L-kynurenine from L-tryptophan: step 1/2. Functionally, heme-dependent dioxygenase that catalyzes the oxidative cleavage of the L-tryptophan (L-Trp) pyrrole ring and converts L-tryptophan to N-formyl-L-kynurenine. Catalyzes the oxidative cleavage of the indole moiety. The protein is Tryptophan 2,3-dioxygenase of Shewanella woodyi (strain ATCC 51908 / MS32).